The chain runs to 383 residues: Sulfate adenylyltransferase (383 aa).

This sequence belongs to the sulfate adenylyltransferase family.

The enzyme catalyses sulfate + ATP + H(+) = adenosine 5'-phosphosulfate + diphosphate. It functions in the pathway sulfur metabolism; hydrogen sulfide biosynthesis; sulfite from sulfate: step 1/3. The sequence is that of Sulfate adenylyltransferase from Halothermothrix orenii (strain H 168 / OCM 544 / DSM 9562).